The primary structure comprises 954 residues: MDQLASLAESVAMEEDSEKQSIKGESSLEPDSTPSSPKITARWNPSEACRPLVDDAPIFYPTNEDFDDPLGYIEKLRSKAESYGICRIVPPVAWRPPCPLKEKKIWENSKFPTRIQFIDLLQNREPIKKSTKTKKRKRRRISKIGYTRRKRDSGCDTASSGSSDSEGKFGFQTGPDFTLEEFQKYDEYFKECYFQSEDHPGSKASENKKFKPKVKDLEGEYWRIVEQATDEVEVYYGADLETKKFGSGFPKYKPGYPISEADQYSQCGWNLNNLSRLPGSVLAFESCDISGVIVPWLYVGMCFSTFCWHVEDHHLYSMNYLHTGDPKVWYGIPGNHAESFENVMKKRLPDLFEEQPDLLHQLVTQLSPRILKEEGVPVYRAVQRSGEFILTFPKAYHSGFNCGFNCAEAVNVAPVDWLVHGQNAVEGYSKQRRKSSLSHDKLLLGAAMEATYCLWELSLSKKKTPVIARWKRVCSEDGLLTKAVKKRVQMEEERLNHLQDGFSLRKMEGDFDNKRERECFLCFYDLHMSASSCKCSPNRFACLIHAKDLCSCESKDRYILIRHTLDELWALVRALEGDLDAIDLWASKCRDQYPSQHPRAREYAYLKSAPCIKSRGSSKVQQREQNNLQLVSERLQSDLTSNKEVQLKQDGDSDVNRHGHESERNHVHGITDKSAVTDVKLGVGGKFDEKKISVESQNPHSVSDVGCSELAKKVDGCLGGKDQNAATNRLSLSVELLSSGSLVVKKLWCSKQAIYPKGFKSRVKFLSVLDPTNLTNYISEVLDAGLLGPLFRVSVEDYPTENFSNVSAEKCWQMVTQRLKLEIIKKCDQPVSSLTSLQPLESINGLEMFGFLSPHVIKVVEALDPKHQLEEYWNQKAVKLFGAEPIKEGEKDDTEKGGASDPSLDRDTRLLRGLLKKATPEELVMMHGLLCGETRNTELKEELSTLVDKMEISP.

The interval 1 to 46 (MDQLASLAESVAMEEDSEKQSIKGESSLEPDSTPSSPKITARWNPS) is disordered. A compositionally biased stretch (polar residues) spans 29–38 (EPDSTPSSPK). Positions 56–97 (APIFYPTNEDFDDPLGYIEKLRSKAESYGICRIVPPVAWRPP) constitute a JmjN domain. Positions 136 to 143 (RKRRRISK) match the Nuclear localization signal 1 motif. Residues 148–170 (RRKRDSGCDTASSGSSDSEGKFG) are disordered. Residues 263-429 (QYSQCGWNLN…HGQNAVEGYS (167 aa)) form the JmjC domain. Fe cation-binding residues include H309, E311, and H397. A Nuclear localization signal 2 motif is present at residues 470 to 477 (WKRVCSED). C519, C522, C533, C535, C542, H545, C550, and C552 together coordinate Zn(2+). The C5HC2 zinc finger occupies 519–571 (CFLCFYDLHMSASSCKCSPNRFACLIHAKDLCSCESKDRYILIRHTLDELWAL). The disordered stretch occupies residues 641–670 (SNKEVQLKQDGDSDVNRHGHESERNHVHGI). A compositionally biased stretch (basic and acidic residues) spans 645–670 (VQLKQDGDSDVNRHGHESERNHVHGI). The FYR N-terminal domain maps to 726-784 (ATNRLSLSVELLSSGSLVVKKLWCSKQAIYPKGFKSRVKFLSVLDPTNLTNYISEVLDA). One can recognise an FYR C-terminal domain in the interval 786–876 (LLGPLFRVSV…HQLEEYWNQK (91 aa)). A disordered region spans residues 884 to 905 (EPIKEGEKDDTEKGGASDPSLD). Residues 885 to 905 (PIKEGEKDDTEKGGASDPSLD) show a composition bias toward basic and acidic residues.

Belongs to the JARID1 histone demethylase family. In terms of assembly, interacts with NAC050 and NAC051/NAC052. Interacts with THAL in the nucleus. It depends on Fe(2+) as a cofactor. Expressed in shoot apex, primary root tip, trichomes of young leaves, leaf vascular tissues, anther filaments and styles. Detected in inflorescences, leaves, stems, roots and siliques. Mostly expressed in floral organs, and, at low levels, in other organs.

The protein resides in the nucleus. It is found in the nucleoplasm. It carries out the reaction N(6),N(6),N(6)-trimethyl-L-lysyl(4)-[histone H3] + 2-oxoglutarate + O2 = N(6),N(6)-dimethyl-L-lysyl(4)-[histone H3] + formaldehyde + succinate + CO2. The enzyme catalyses N(6),N(6)-dimethyl-L-lysyl(4)-[histone H3] + 2-oxoglutarate + O2 = N(6)-methyl-L-lysyl(4)-[histone H3] + formaldehyde + succinate + CO2. It catalyses the reaction N(6)-methyl-L-lysyl(4)-[histone H3] + 2-oxoglutarate + O2 = L-lysyl(4)-[histone H3] + formaldehyde + succinate + CO2. The catalysed reaction is N(6),N(6),N(6)-trimethyl-L-lysyl(4)-[histone H3] + 3 2-oxoglutarate + 3 O2 = L-lysyl(4)-[histone H3] + 3 formaldehyde + 3 succinate + 3 CO2. In terms of biological role, transcriptional repressor. Histone demethylase that demethylates 'Lys-4' (H3K4me) of histone H3 with a higher activity for H3K4me3 and H3K4me2 than H3K4me1. No activity on H3K9me3/2, H3K36me3/2 and H3K27me3/2. Function as a nocturne 'eraser' to counteract the diurnal 'writer' methylase activity of ATXR3/SDG2 thus orchestrating the circadian rhythm of histone modifications (e.g. H3K4me3) and modulating the rhythmic expression of diurnal target genes; this mechanism also relies on the circadian clock oscillators CCA1 and LHY. Involved in a negative regulation of root meristem growth upon suboptimal root growth conditions. Represses FT and TSF expression to inhibit the floral transition. Binds around the transcription start site of the FT locus. Involved in the DRM2-mediated maintenance of DNA methylation, but not required for the de novo DNA methylation. Required for demethylating histone H3K4me3 at the target of RNA silencing. Counteracts the DNA methylation of expressed transgenes; specific attenuation of transgene DNA methylation enhances the production of aberrant RNAs (e.g. uncapped and antisense) that readily induce systemic RDR6-dependent post-transcriptional transgene silencing (PTGS) spreading. Together with NAC051/NAC052 and NAC050, regulates gene expression and flowering time, probably by the promotion of RNA-mediated gene silencing. Together with JMJ16 and JMJ17, required for plant growth and development. Promotes local and systemic immunity (especially toward the bacterial pathogen Pseudomonas syringae Pst DC3000 avrRpt2) by regulating positively pathogen-induced H3K4me3 enrichment and expression of defense genes involved in salicylic acid (SA)- and pipecolic acid (Pip)-mediated defense pathways (e.g. PR1, FMO1, ALD1 and SARD4). The chain is Lysine-specific demethylase JMJ14 from Arabidopsis thaliana (Mouse-ear cress).